Reading from the N-terminus, the 997-residue chain is Pro-apoptotic serine protease NMA111 (997 aa).

Residues 1–43 (MTISLSNIKKRDHSKISDGTSGESSLVKRKQLESATGDQEEEY) are disordered. The interval 83 to 273 (VVSIHFSQVA…LPLDRILRAL (191 aa)) is serine protease. Residues H121, D152, and S235 each act as charge relay system in the active site. PDZ domains follow at residues 300 to 378 (RRLG…QRGG) and 779 to 854 (EEWI…VRDG).

Belongs to the peptidase S1C family. As to quaternary structure, interacts with BIR1.

It is found in the nucleus. Nuclear serine protease which mediates apoptosis through proteolysis of the apoptotic inhibitor BIR1. The protein is Pro-apoptotic serine protease NMA111 (NMA111) of Saccharomyces cerevisiae (strain YJM789) (Baker's yeast).